Here is a 194-residue protein sequence, read N- to C-terminus: RxLR effector protein Avh240 (194 aa).

The N-terminal stretch at 1 to 23 (MRPYFTLLLALAFILACTNLVEA) is a signal peptide. Residues 38-57 (RHLRTAVASVVDLPDDEDER) carry the RxLR-dEER motif. Residues 58-108 (LLGYNTVQLWRMRRTANKLMNGKLTTQKEAALKKWMASQQDKFLAKWLKSS) are host plasma membrane-binding.

Belongs to the RxLR effector family. In terms of assembly, homodimer. Interacts with host soybean aspartic protease AP1.

It localises to the secreted. It is found in the host cell membrane. Effector that suppresses plant defense responses during the early stages of pathogen infection. Suppresses cell death induced by effectors and PAMPs in plant hosts. Avh240 dimerizes and localizes at the plasma membrane to interfere with aspartic protease AP1 secretion, which presents an effective mechanism by which effector proteins suppress plant apoplastic immunity. This is RxLR effector protein Avh240 from Phytophthora sojae (Soybean stem and root rot agent).